Reading from the N-terminus, the 655-residue chain is Sphingomyelin phosphodiesterase 3 (655 aa).

The Cytoplasmic segment spans residues 1-10; the sequence is MVLYTTPFPN. Residues 11 to 31 constitute an intramembrane region (helical); it reads SCLSALHCVSWALIFPCYWLV. The Cytoplasmic portion of the chain corresponds to 32-64; sequence DRLAASFIPTTYEKRQRADDPCCLQLLCTALFT. S-palmitoyl cysteine attachment occurs at residues Cys-53, Cys-54, and Cys-59. Residues 65–85 constitute an intramembrane region (helical); that stretch reads PIYLALLVASLPFAFLGFLFW. The Cytoplasmic segment spans residues 86 to 655; that stretch reads SPLQSARRPY…LMVSSGEEEA (570 aa). Ser-178 carries the post-translational modification Phosphoserine. Residues 210 to 319 are disordered; that stretch reads VEYKGDGGRH…DTSASGEPGA (110 aa). Basic and acidic residues-rich tracts occupy residues 212-222 and 248-257; these read YKGDGGRHPGD and GGEEGGRPPE. Residues 279–299 show a composition bias toward polar residues; that stretch reads TPNHNQQDGDSGSLGSPSASR. Ser-291 carries the post-translational modification Phosphoserine. Glu-364 is a Mg(2+) binding site. S-palmitoyl cysteine attachment occurs at residues Cys-397 and Cys-398. Residue His-639 is the Proton acceptor of the active site.

This sequence belongs to the neutral sphingomyelinase family. It depends on Mg(2+) as a cofactor. Post-translationally, palmitoylated, palmitoylation-deficient proteins are targeted for lysosomal degradation. In terms of tissue distribution, predominantly expressed in brain.

The protein resides in the golgi apparatus membrane. It is found in the cell membrane. It catalyses the reaction a sphingomyelin + H2O = phosphocholine + an N-acylsphing-4-enine + H(+). It carries out the reaction N-(15Z-tetracosenoyl)sphing-4-enine-1-phosphocholine + H2O = N-(15Z-tetracosenoyl)-sphing-4-enine + phosphocholine + H(+). The catalysed reaction is N-(tetracosanoyl)-sphing-4-enine-1-phosphocholine + H2O = N-tetracosanoyl-sphing-4-enine + phosphocholine + H(+). The enzyme catalyses an N-(acyl)-sphingosylphosphocholine + H2O = an N-acyl-sphingoid base + phosphocholine + H(+). It catalyses the reaction 1-hexadecanoyl-sn-glycero-3-phosphocholine + H2O = 1-hexadecanoyl-sn-glycerol + phosphocholine + H(+). It carries out the reaction 1-O-octadecyl-sn-glycero-3-phosphocholine + H2O = 1-O-octadecyl-sn-glycerol + phosphocholine + H(+). The catalysed reaction is a sphingosylphosphocholine + H2O = a sphingoid base + phosphocholine + H(+). The enzyme catalyses N-(hexadecanoyl)-sphing-4-enine-1-phosphocholine + H2O = N-hexadecanoylsphing-4-enine + phosphocholine + H(+). Its pathway is lipid metabolism; sphingolipid metabolism. Its activity is regulated as follows. Inhibited by nSMase inhibitor GW4869. Binding of anionic phospholipids (APLs) such as phosphatidylserine (PS) and phosphatidic acid (PA) increases enzymatic activity. Catalyzes the hydrolysis of sphingomyelin to form ceramide and phosphocholine. Ceramide mediates numerous cellular functions, such as apoptosis and growth arrest, and is capable of regulating these 2 cellular events independently. Also hydrolyzes sphingosylphosphocholine. Regulates the cell cycle by acting as a growth suppressor in confluent cells. Probably acts as a regulator of postnatal development and participates in bone and dentin mineralization. Binds to anionic phospholipids (APLs) such as phosphatidylserine (PS) and phosphatidic acid (PA) that modulate enzymatic activity and subcellular location. May be involved in IL-1-beta-induced JNK activation in hepatocytes. May act as a mediator in transcriptional regulation of NOS2/iNOS via the NF-kappa-B activation under inflammatory conditions. The protein is Sphingomyelin phosphodiesterase 3 of Homo sapiens (Human).